A 281-amino-acid chain; its full sequence is Probable endonuclease 4 (281 aa).

9 residues coordinate Zn(2+): histidine 69, histidine 109, glutamate 145, aspartate 179, histidine 182, histidine 216, aspartate 229, histidine 231, and glutamate 261.

This sequence belongs to the AP endonuclease 2 family. Zn(2+) serves as cofactor.

The catalysed reaction is Endonucleolytic cleavage to 5'-phosphooligonucleotide end-products.. Functionally, endonuclease IV plays a role in DNA repair. It cleaves phosphodiester bonds at apurinic or apyrimidinic (AP) sites, generating a 3'-hydroxyl group and a 5'-terminal sugar phosphate. The sequence is that of Probable endonuclease 4 from Chlorobaculum tepidum (strain ATCC 49652 / DSM 12025 / NBRC 103806 / TLS) (Chlorobium tepidum).